Consider the following 477-residue polypeptide: 3-sulfolactaldehyde dehydrogenase (477 aa).

NAD(+) is bound at residue 232-233; sequence GS. Glu252 functions as the Proton acceptor in the catalytic mechanism. An NAD(+)-binding site is contributed by Leu253. Residue Cys286 is the Nucleophile of the active site. Glu380 provides a ligand contact to NAD(+).

The protein belongs to the aldehyde dehydrogenase family.

It catalyses the reaction (2S)-3-sulfolactaldehyde + NAD(+) + H2O = (2S)-3-sulfolactate + NADH + 2 H(+). Part of the sulfo-TAL (or sulfo-SFT) pathway, a D-sulfoquinovose degradation pathway that produces sulfolactate (SL). Catalyzes the oxidation of 3-sulfolactaldehyde (SLA) to sulfolactate (SL). This Priestia aryabhattai (Bacillus aryabhattai) protein is 3-sulfolactaldehyde dehydrogenase.